Reading from the N-terminus, the 233-residue chain is Uridylate kinase (233 aa).

9-10 (GS) is an ATP binding site. Gly43 is a UMP binding site. ATP-binding residues include Gly44 and Arg48. UMP contacts are provided by residues Asp65 and 113 to 119 (VTPGQTT). Residues Thr139, Tyr145, and Asp148 each contribute to the ATP site.

Belongs to the UMP kinase family. Homohexamer.

The protein resides in the cytoplasm. The catalysed reaction is UMP + ATP = UDP + ADP. The protein operates within pyrimidine metabolism; CTP biosynthesis via de novo pathway; UDP from UMP (UMPK route): step 1/1. With respect to regulation, inhibited by UTP. Catalyzes the reversible phosphorylation of UMP to UDP. This chain is Uridylate kinase, found in Methanosarcina barkeri (strain Fusaro / DSM 804).